Here is a 78-residue protein sequence, read N- to C-terminus: Translation initiation factor IF-1, chloroplastic (78 aa).

The 72-residue stretch at 1-72 (MKKQNLIDME…TKGRITYRLR (72 aa)) folds into the S1-like domain.

Belongs to the IF-1 family. Component of the 30S ribosomal translation pre-initiation complex which assembles on the 30S ribosome in the order IF-2 and IF-3, IF-1 and N-formylmethionyl-tRNA(fMet); mRNA recruitment can occur at any time during PIC assembly.

The protein resides in the plastid. It is found in the chloroplast. Its function is as follows. One of the essential components for the initiation of protein synthesis. Stabilizes the binding of IF-2 and IF-3 on the 30S subunit to which N-formylmethionyl-tRNA(fMet) subsequently binds. Helps modulate mRNA selection, yielding the 30S pre-initiation complex (PIC). Upon addition of the 50S ribosomal subunit IF-1, IF-2 and IF-3 are released leaving the mature 70S translation initiation complex. This Physcomitrium patens (Spreading-leaved earth moss) protein is Translation initiation factor IF-1, chloroplastic.